Reading from the N-terminus, the 181-residue chain is Photosystem I assembly protein Ycf4 (181 aa).

A run of 2 helical transmembrane segments spans residues 19 to 39 (YFWA…GISS) and 62 to 82 (VMMF…LTII).

The protein belongs to the Ycf4 family.

Its subcellular location is the plastid. It localises to the chloroplast thylakoid membrane. Seems to be required for the assembly of the photosystem I complex. This chain is Photosystem I assembly protein Ycf4, found in Phaeodactylum tricornutum (strain CCAP 1055/1).